A 78-amino-acid polypeptide reads, in one-letter code: Putative defensin-like protein 288 (78 aa).

The N-terminal stretch at 1-21 (MSNLRLTIAVFLAALFQTLWW) is a signal peptide.

It belongs to the DEFL family.

It localises to the secreted. The protein is Putative defensin-like protein 288 of Arabidopsis thaliana (Mouse-ear cress).